The sequence spans 890 residues: Translation initiation factor IF-2 (890 aa).

The segment at 45 to 304 (LIDHLNQKNS…LQQGFQKPAQ (260 aa)) is disordered. Over residues 67-81 (STLNIPGTGGKSKSV) the composition is skewed to polar residues. Residues 92–217 (VKRDPQEAER…RMAEENKWTD (126 aa)) show a composition bias toward basic and acidic residues. Over residues 252 to 266 (GRGRNAKAARPKKGN) the composition is skewed to basic residues. Positions 267–280 (KHAESKADREEARA) are enriched in basic and acidic residues. One can recognise a tr-type G domain in the interval 389–558 (PRAPVVTIMG…LLQAEVLELK (170 aa)). The tract at residues 398 to 405 (GHVDHGKT) is G1. 398 to 405 (GHVDHGKT) contacts GTP. The tract at residues 423-427 (GITQH) is G2. Positions 444-447 (DTPG) are G3. Residues 444–448 (DTPGH) and 498–501 (NKID) each bind GTP. A G4 region spans residues 498-501 (NKID). Residues 534 to 536 (SAK) are G5. At lysine 808 the chain carries N6-acetyllysine.

Belongs to the TRAFAC class translation factor GTPase superfamily. Classic translation factor GTPase family. IF-2 subfamily.

The protein localises to the cytoplasm. Its function is as follows. One of the essential components for the initiation of protein synthesis. Protects formylmethionyl-tRNA from spontaneous hydrolysis and promotes its binding to the 30S ribosomal subunits. Also involved in the hydrolysis of GTP during the formation of the 70S ribosomal complex. In Escherichia coli (strain 55989 / EAEC), this protein is Translation initiation factor IF-2.